Reading from the N-terminus, the 425-residue chain is Serine--tRNA ligase (425 aa).

231 to 233 is an L-serine binding site; the sequence is TAE. 262–264 contacts ATP; sequence RSE. E285 contacts L-serine. An ATP-binding site is contributed by 349 to 352; sequence EISS. L-serine is bound at residue S385.

The protein belongs to the class-II aminoacyl-tRNA synthetase family. Type-1 seryl-tRNA synthetase subfamily. As to quaternary structure, homodimer. The tRNA molecule binds across the dimer.

The protein localises to the cytoplasm. It carries out the reaction tRNA(Ser) + L-serine + ATP = L-seryl-tRNA(Ser) + AMP + diphosphate + H(+). It catalyses the reaction tRNA(Sec) + L-serine + ATP = L-seryl-tRNA(Sec) + AMP + diphosphate + H(+). The protein operates within aminoacyl-tRNA biosynthesis; selenocysteinyl-tRNA(Sec) biosynthesis; L-seryl-tRNA(Sec) from L-serine and tRNA(Sec): step 1/1. Functionally, catalyzes the attachment of serine to tRNA(Ser). Is also able to aminoacylate tRNA(Sec) with serine, to form the misacylated tRNA L-seryl-tRNA(Sec), which will be further converted into selenocysteinyl-tRNA(Sec). This Bacillus licheniformis (strain ATCC 14580 / DSM 13 / JCM 2505 / CCUG 7422 / NBRC 12200 / NCIMB 9375 / NCTC 10341 / NRRL NRS-1264 / Gibson 46) protein is Serine--tRNA ligase.